Reading from the N-terminus, the 476-residue chain is Dihydrolipoyl dehydrogenase (476 aa).

FAD-binding positions include Glu-36–Cys-45, Lys-54, and Ala-117. Cys-45 and Cys-50 are oxidised to a cystine. NAD(+) contacts are provided by residues Gly-182–Ile-186, Asp-205, Val-238, and Ala-271–Arg-274. Residues Asp-314 and Ala-322 each contribute to the FAD site. Catalysis depends on His-446, which acts as the Proton acceptor.

It belongs to the class-I pyridine nucleotide-disulfide oxidoreductase family. As to quaternary structure, homodimer. FAD is required as a cofactor.

It is found in the cytoplasm. It carries out the reaction N(6)-[(R)-dihydrolipoyl]-L-lysyl-[protein] + NAD(+) = N(6)-[(R)-lipoyl]-L-lysyl-[protein] + NADH + H(+). Functionally, lipoamide dehydrogenase is a component of the alpha-ketoacid dehydrogenase complexes. In Buchnera aphidicola subsp. Schizaphis graminum (strain Sg), this protein is Dihydrolipoyl dehydrogenase (lpdA).